The chain runs to 891 residues: DNA mismatch repair protein MutS (891 aa).

646–653 contacts ATP; it reads GPNMAGKS.

The protein belongs to the DNA mismatch repair MutS family.

This protein is involved in the repair of mismatches in DNA. It is possible that it carries out the mismatch recognition step. This protein has a weak ATPase activity. This Rickettsia massiliae (strain Mtu5) protein is DNA mismatch repair protein MutS.